The primary structure comprises 179 residues: Adenine phosphoribosyltransferase (179 aa).

It belongs to the purine/pyrimidine phosphoribosyltransferase family. Homodimer.

It localises to the cytoplasm. It catalyses the reaction AMP + diphosphate = 5-phospho-alpha-D-ribose 1-diphosphate + adenine. Its pathway is purine metabolism; AMP biosynthesis via salvage pathway; AMP from adenine: step 1/1. Its function is as follows. Catalyzes a salvage reaction resulting in the formation of AMP, that is energically less costly than de novo synthesis. The protein is Adenine phosphoribosyltransferase of Histophilus somni (strain 129Pt) (Haemophilus somnus).